A 405-amino-acid polypeptide reads, in one-letter code: Caspase-1 (405 aa).

The 91-residue stretch at 1-91 (MADKVLKEKR…HLAETLRLSS (91 aa)) folds into the CARD domain. Positions 1–119 (MADKVLKEKR…SSPALQAMPD (119 aa)) are excised as a propeptide. Catalysis depends on residues histidine 238 and cysteine 286. The propeptide occupies 299–317 (STGTSGNSSSLAPDDFEDD). Serine 303 is subject to Phosphoserine.

The protein belongs to the peptidase C14A family. In terms of assembly, heterotetramer that consists of two anti-parallel arranged heterodimers, each one formed by a 20 kDa (Caspase-1 subunit p20) and a 10 kDa (Caspase-1 subunit p10) subunit. May be a component of the inflammasome, a protein complex which also includes PYCARD, CARD8 and NLRP2 and whose function would be the activation of pro-inflammatory caspases. Component of the AIM2 PANoptosome complex, a multiprotein complex that drives inflammatory cell death (PANoptosis). Both the p10 and p20 subunits interact with MEFV. Interacts with CARD17P/INCA and CARD18. Interacts with SERPINB1; this interaction regulates CASP1 activity. As to quaternary structure, heterotetramer that consists of two anti-parallel arranged heterodimers, each one formed by a 20 kDa (Caspase-1 subunit p20) and a 10 kDa (Caspase-1 subunit p10) subunit. Post-translationally, the two subunits are derived from the precursor sequence by an autocatalytic mechanism. Ubiquitinated via 'Lys-11'-linked polyubiquitination. Deubiquitinated by USP8.

The protein localises to the cytoplasm. It localises to the cell membrane. The catalysed reaction is Strict requirement for an Asp residue at position P1 and has a preferred cleavage sequence of Tyr-Val-Ala-Asp-|-.. Its function is as follows. Thiol protease involved in a variety of inflammatory processes by proteolytically cleaving other proteins, such as the precursors of the inflammatory cytokines interleukin-1 beta (IL1B) and interleukin 18 (IL18) as well as the pyroptosis inducer Gasdermin-D (GSDMD), into active mature peptides. Plays a key role in cell immunity as an inflammatory response initiator: once activated through formation of an inflammasome complex, it initiates a pro-inflammatory response through the cleavage of the two inflammatory cytokines IL1B and IL18, releasing the mature cytokines which are involved in a variety of inflammatory processes. Cleaves a tetrapeptide after an Asp residue at position P1. Also initiates pyroptosis, a programmed lytic cell death pathway, through cleavage of GSDMD. In contrast to cleavage of interleukin IL1B, recognition and cleavage of GSDMD is not strictly dependent on the consensus cleavage site but depends on an exosite interface on CASP1 that recognizes and binds the Gasdermin-D, C-terminal (GSDMD-CT) part. Cleaves and activates CASP7 in response to bacterial infection, promoting plasma membrane repair. Upon inflammasome activation, during DNA virus infection but not RNA virus challenge, controls antiviral immunity through the cleavage of CGAS, rendering it inactive. In apoptotic cells, cleaves SPHK2 which is released from cells and remains enzymatically active extracellularly. The chain is Caspase-1 (CASP1) from Equus caballus (Horse).